The sequence spans 44 residues: Cuticle protein CP466 (44 aa).

2 repeat units span residues 3–20 and 27–44.

In terms of tissue distribution, calcified shell.

This Cancer pagurus (Rock crab) protein is Cuticle protein CP466.